A 137-amino-acid chain; its full sequence is SMR2 protein (137 aa).

Residues 1 to 18 (MLVVLLTAALLALSSAQN) form the signal peptide. The segment at 14 to 113 (SSAQNTDEEV…LHHRENLRPQ (100 aa)) is disordered. The segment covering 75–85 (QQQQPLPVENQ) has biased composition (low complexity). The segment covering 99–110 (PPPETLHHRENL) has biased composition (basic and acidic residues).

The protein resides in the secreted. Its function is as follows. Unknown, male-specific function. The chain is SMR2 protein (Smr2) from Rattus norvegicus (Rat).